A 789-amino-acid polypeptide reads, in one-letter code: Tax1-binding protein 1 (789 aa).

3 positions are modified to phosphoserine: S124, S138, and S225. Residues 144–599 (TTKAGLLELK…LKRSLENPAE (456 aa)) are a coiled coil. The segment at 320–420 (EEIGRLQLCL…ELKLNAMKKD (101 aa)) is oligomerization. Residues 481-502 (TGNQQKVNDASVNTDPATSAST) are compositionally biased toward polar residues. Positions 481-508 (TGNQQKVNDASVNTDPATSASTVDVKPS) are disordered. A Phosphoserine; by IKKA modification is found at S593. The residue at position 609 (S609) is a Phosphoserine. Residues 639-660 (YASQETRDGADGAFYPDEIQRP) are disordered. S666 carries the phosphoserine; by IKKA modification. The tract at residues 678-712 (PARNFSRPDGLEDSEDSKEDENVPTAPDPPSQHLR) is disordered. UBZ1-type zinc fingers lie at residues 727–753 (HKKC…VESH) and 754–780 (WKVC…VQTH). Zn(2+)-binding residues include C730, C733, H749, H753, C757, C760, H776, and H780.

As to quaternary structure, homooligomer. Interacts with TNFAIP3. Interacts with STARD13. Interacts with MYO6. Interacts with TOM1; the interaction is indirect and is mediated by MYO6, which acts as a bridge between TOM1 and TAX1BP1. Interacts with MAVS; this interaction induces MAVS polyubiquitination. Interacts with TNIP1. Interacts with TRAF6; this interaction mediates deubiquitination of TRAF6 and inhibition of NF-kappa-B activation. Interacts with RIPK1; this interaction negatively regulates RIPK1 ubiquitination. Interacts with NBR1. Interacts with TBK1. Interacts with RB1CC1. Interacts with SQSTM1. Interacts with AZI2. Interacts with TICAM1 and TRIM32; these interactions target TICAM1 to TAX1BP1-mediated selective autophagic degradation. (Microbial infection) Interacts with the HTLV-1 protein Tax. In terms of assembly, (Microbial infection) Interacts with Respiratory syncytial virus protein N; this interaction may promote viral growth by inhibiting the innate immune response. As to quaternary structure, (Microbial infection) Interacts with Lassa virus protein Z. (Microbial infection) Interacts with Mopeia virus protein Z. Post-translationally, phosphorylated in the C-terminal region by CHUK/IKKA leading to NF-kappa-B signaling down-regulation. Expressed in all tissues tested.

The protein resides in the cytoplasm. The protein localises to the mitochondrion. Its subcellular location is the preautophagosomal structure. It is found in the cytoplasmic vesicle. It localises to the autophagosome. In terms of biological role, ubiquitin-binding adapter that participates in inflammatory, antiviral and innate immune processes as well as selective autophagy regulation. Plays a key role in the negative regulation of NF-kappa-B and IRF3 signalings by acting as an adapter for the ubiquitin-editing enzyme A20/TNFAIP3 to bind and inactivate its substrates. Disrupts the interactions between the E3 ubiquitin ligase TRAF3 and TBK1/IKBKE to attenuate 'Lys63'-linked polyubiquitination of TBK1 and thereby IFN-beta production. Also recruits A20/TNFAIP3 to ubiquitinated signaling proteins TRAF6 and RIPK1, leading to their deubiquitination and disruption of IL-1 and TNF-induced NF-kappa-B signaling pathways. Inhibits virus-induced apoptosis by inducing the 'Lys-48'-linked polyubiquitination and degradation of MAVS via recruitment of the E3 ligase ITCH, thereby attenuating MAVS-mediated apoptosis signaling. As a macroautophagy/autophagy receptor, facilitates the xenophagic clearance of pathogenic bacteria such as Salmonella typhimurium and Mycobacterium tuberculosis. Upon NBR1 recruitment to the SQSTM1-ubiquitin condensates, acts as the major recruiter of RB1CC1 to these ubiquitin condensates to promote their autophagic degradation. Mediates the autophagic degradation of other substrates including TICAM1. This is Tax1-binding protein 1 (TAX1BP1) from Homo sapiens (Human).